The sequence spans 1165 residues: Immunoglobulin superfamily member 3 (1165 aa).

The signal sequence occupies residues 1 to 20 (MGTAAGLLLAALLLAGTSWA). Residues 21–1095 (QREVNIQQGP…LQSTICANDA (1075 aa)) lie on the Extracellular side of the membrane. Ig-like C2-type domains are found at residues 22-139 (REVN…AKMN), 144-262 (PDTL…WFPL), 276-386 (PTDK…RGPS), 406-527 (PLRT…WQLL), 545-661 (FAVT…WTQL), 678-800 (PRLQ…EEAS), 810-934 (PDAN…WYKR), and 951-1067 (PALQ…WYLL). Cystine bridges form between Cys-43–Cys-121 and Cys-168–Cys-246. Residues 250–252 (EWI) carry the EWI motif motif. 6 disulfide bridges follow: Cys-302–Cys-376, Cys-432–Cys-511, Cys-566–Cys-645, Cys-701–Cys-779, Cys-835–Cys-918, and Cys-974–Cys-1051. The chain crosses the membrane as a helical span at residues 1096 to 1116 (LFYLVFFYPFPIFGILIITIL). Residues 1117–1165 (LVRFRHRPTSKPGEGKNGVPLLWIKEPHLNYSPTCLEPPVLSIHPGTID) are Cytoplasmic-facing.

It is found in the membrane. This chain is Immunoglobulin superfamily member 3 (igsf3), found in Xenopus laevis (African clawed frog).